Consider the following 256-residue polypeptide: Ubiquinone biosynthesis O-methyltransferase (256 aa).

Arginine 44, glycine 80, aspartate 101, and methionine 144 together coordinate S-adenosyl-L-methionine.

This sequence belongs to the methyltransferase superfamily. UbiG/COQ3 family.

It catalyses the reaction a 3-demethylubiquinol + S-adenosyl-L-methionine = a ubiquinol + S-adenosyl-L-homocysteine + H(+). It carries out the reaction a 3-(all-trans-polyprenyl)benzene-1,2-diol + S-adenosyl-L-methionine = a 2-methoxy-6-(all-trans-polyprenyl)phenol + S-adenosyl-L-homocysteine + H(+). Its pathway is cofactor biosynthesis; ubiquinone biosynthesis. O-methyltransferase that catalyzes the 2 O-methylation steps in the ubiquinone biosynthetic pathway. The protein is Ubiquinone biosynthesis O-methyltransferase of Methylocella silvestris (strain DSM 15510 / CIP 108128 / LMG 27833 / NCIMB 13906 / BL2).